The following is a 113-amino-acid chain: Ribonuclease P protein component (113 aa).

It belongs to the RnpA family. In terms of assembly, consists of a catalytic RNA component (M1 or rnpB) and a protein subunit.

The catalysed reaction is Endonucleolytic cleavage of RNA, removing 5'-extranucleotides from tRNA precursor.. In terms of biological role, RNaseP catalyzes the removal of the 5'-leader sequence from pre-tRNA to produce the mature 5'-terminus. It can also cleave other RNA substrates such as 4.5S RNA. The protein component plays an auxiliary but essential role in vivo by binding to the 5'-leader sequence and broadening the substrate specificity of the ribozyme. This Ureaplasma parvum serovar 3 (strain ATCC 27815 / 27 / NCTC 11736) protein is Ribonuclease P protein component.